The primary structure comprises 172 residues: 3-phenylpropionate/cinnamic acid dioxygenase subunit beta (172 aa).

It belongs to the bacterial ring-hydroxylating dioxygenase beta subunit family. As to quaternary structure, this dioxygenase system consists of four proteins: the two subunits of the hydroxylase component (HcaE and HcaF), a ferredoxin (HcaC) and a ferredoxin reductase (HcaD).

The catalysed reaction is 3-phenylpropanoate + NADH + O2 + H(+) = 3-(cis-5,6-dihydroxycyclohexa-1,3-dien-1-yl)propanoate + NAD(+). It carries out the reaction (E)-cinnamate + NADH + O2 + H(+) = (2E)-3-(cis-5,6-dihydroxycyclohexa-1,3-dien-1-yl)prop-2-enoate + NAD(+). It functions in the pathway aromatic compound metabolism; 3-phenylpropanoate degradation. Part of the multicomponent 3-phenylpropionate dioxygenase. Converts 3-phenylpropionic acid (PP) and cinnamic acid (CI) into 3-phenylpropionate-dihydrodiol (PP-dihydrodiol) and cinnamic acid-dihydrodiol (CI-dihydrodiol), respectively. The sequence is that of 3-phenylpropionate/cinnamic acid dioxygenase subunit beta from Escherichia coli O157:H7.